The primary structure comprises 261 residues: 5'-nucleotidase SurE (261 aa).

Residues D8, D9, S39, and N91 each coordinate a divalent metal cation.

Belongs to the SurE nucleotidase family. Requires a divalent metal cation as cofactor.

It localises to the cytoplasm. It carries out the reaction a ribonucleoside 5'-phosphate + H2O = a ribonucleoside + phosphate. Its function is as follows. Nucleotidase that shows phosphatase activity on nucleoside 5'-monophosphates. The sequence is that of 5'-nucleotidase SurE from Polaromonas naphthalenivorans (strain CJ2).